The sequence spans 118 residues: Large ribosomal subunit protein bL20 (118 aa).

It belongs to the bacterial ribosomal protein bL20 family.

Functionally, binds directly to 23S ribosomal RNA and is necessary for the in vitro assembly process of the 50S ribosomal subunit. It is not involved in the protein synthesizing functions of that subunit. The chain is Large ribosomal subunit protein bL20 from Klebsiella pneumoniae (strain 342).